We begin with the raw amino-acid sequence, 376 residues long: Delta(12) fatty acid desaturase fat-2 (376 aa).

The next 4 membrane-spanning stretches (helical) occupy residues 45–65 (ISYLIKDYVLLAGLYFAVPYI), 69–89 (LGWIGLLGWYWAMGIVGSALF), 203–223 (VKCAVSGVACAICAYIAFVLC), and 228–248 (YTFVKYYYIPLLFQGLILVII).

It belongs to the fatty acid desaturase type 1 family.

It is found in the membrane. It carries out the reaction (9Z)-octadecenoyl-CoA + 2 Fe(II)-[cytochrome b5] + O2 + 2 H(+) = (9Z,12Z)-octadecadienoyl-CoA + 2 Fe(III)-[cytochrome b5] + 2 H2O. It catalyses the reaction (9Z)-hexadecenoyl-CoA + 2 Fe(II)-[cytochrome b5] + O2 + 2 H(+) = (9Z,12Z)-hexadecadienoyl-CoA + 2 Fe(III)-[cytochrome b5] + 2 H2O. The enzyme catalyses (9Z,12Z)-octadecadienoyl-CoA + 2 Fe(II)-[cytochrome b5] + O2 + 2 H(+) = (9Z,12Z,15Z)-octadecatrienoyl-CoA + 2 Fe(III)-[cytochrome b5] + 2 H2O. The catalysed reaction is (9Z)-heptadecenoyl-CoA + 2 Fe(II)-[cytochrome b5] + O2 + 2 H(+) = (9Z,12Z)-heptadecadienoyl-CoA + 2 Fe(III)-[cytochrome b5] + 2 H2O. It carries out the reaction (9Z)-pentadecenoyl-CoA + 2 Fe(II)-[cytochrome b5] + O2 + 2 H(+) = (9Z,12Z)-pentadecadienoyl-CoA + 2 Fe(III)-[cytochrome b5] + 2 H2O. It catalyses the reaction (6Z,9Z,12Z)-octadecatrienoyl-CoA + 2 Fe(II)-[cytochrome b5] + O2 + 2 H(+) = (6Z,9Z,12Z,15Z)-octadecatetraenoyl-CoA + 2 Fe(III)-[cytochrome b5] + 2 H2O. The enzyme catalyses (9Z)-tetradecenoyl-CoA + 2 Fe(II)-[cytochrome b5] + O2 + 2 H(+) = (9Z,12Z)-tetradecadienoyl-CoA + 2 Fe(III)-[cytochrome b5] + 2 H2O. Its pathway is lipid metabolism; polyunsaturated fatty acid biosynthesis. Can function as a Delta(12)/Delta(15) bifunctional desaturase and behaves as a nu +3' desaturase. Introduces a double bond in the fatty acid chain three carbons away from an existing double bond to biosynthesize polyunsaturated fatty acids (PUFAs) endogenously (PUFAs are essential for membrane structure and many cellular and physiological processes). Acts on a number of substrates like oleoyl-CoA ((9Z)-octadecenoyl-CoA, 18:1n-9), palmitoleoyl-CoA ((9Z)-hexadecenoyl-CoA, 16:1n-7), and gamma-linolenoyl-CoA ((6Z,9Z,12Z)-octadecatrienoyl-CoA, 18:3n-6), to generate linoleoyl-CoA ((9Z,12Z)-octadecadienoyl-CoA, 18:2n-6), (9Z,12Z)-hexadecadienoyl-CoA (16:2n-4) and (6Z,9Z,12Z,15Z)-octadecatetraenoyl-CoA (18:4n-3) respectively. Unlike plants, Caenorhabditis elegans desaturases seem to use fatty acyl-CoAs as substrates. The sequence is that of Delta(12) fatty acid desaturase fat-2 (fat-2) from Caenorhabditis elegans.